A 389-amino-acid chain; its full sequence is Protein Wnt-10b (389 aa).

An N-terminal signal peptide occupies residues 1 to 28 (MLEEPRPRPPPSGLAGLLFLALCSRALS). Residue Thr-46 is modified to Phosphothreonine. 11 disulfide bridges follow: Cys-83/Cys-94, Cys-136/Cys-144, Cys-146/Cys-199, Cys-247/Cys-261, Cys-249/Cys-256, Cys-318/Cys-349, Cys-334/Cys-344, Cys-348/Cys-388, Cys-364/Cys-379, Cys-366/Cys-376, and Cys-371/Cys-372. N-linked (GlcNAc...) asparagine glycosylation occurs at Asn-93. The interval 171–197 (KSFPHSLPSPGPGSSPSPGPQDTWEWG) is disordered. Residues 177 to 189 (LPSPGPGSSPSPG) show a composition bias toward pro residues. Ser-253 carries the O-palmitoleoyl serine; by PORCN lipid modification. Asn-335 carries an N-linked (GlcNAc...) asparagine glycan.

Belongs to the Wnt family. As to quaternary structure, forms a soluble 1:1 complex with AFM; this prevents oligomerization and is required for prolonged biological activity. The complex with AFM may represent the physiological form in body fluids. In terms of processing, palmitoleoylation is required for efficient binding to frizzled receptors. Depalmitoleoylation leads to Wnt signaling pathway inhibition. As to expression, detected in most adult tissues. Highest levels were found in heart and skeletal muscle. Low levels are found in brain.

Its subcellular location is the secreted. The protein localises to the extracellular space. It is found in the extracellular matrix. In terms of biological role, member of the Wnt ligand gene family that encodes for secreted proteins, which activate the Wnt signaling cascade. Specifically activates canonical Wnt/beta-catenin signaling and thus triggers beta-catenin/LEF/TCF-mediated transcriptional programs. Involved in signaling networks controlling stemness, pluripotency and cell fate decisions. Acts in the immune system, mammary gland, adipose tissue, bone and skin. The chain is Protein Wnt-10b (WNT10B) from Homo sapiens (Human).